Consider the following 118-residue polypeptide: Ribosome-binding factor A (118 aa).

The protein belongs to the RbfA family. In terms of assembly, monomer. Binds 30S ribosomal subunits, but not 50S ribosomal subunits or 70S ribosomes.

The protein localises to the cytoplasm. One of several proteins that assist in the late maturation steps of the functional core of the 30S ribosomal subunit. Associates with free 30S ribosomal subunits (but not with 30S subunits that are part of 70S ribosomes or polysomes). Required for efficient processing of 16S rRNA. May interact with the 5'-terminal helix region of 16S rRNA. The polypeptide is Ribosome-binding factor A (Bacillus cereus (strain B4264)).